The primary structure comprises 477 residues: Cysteine--tRNA ligase (477 aa).

Cysteine 29 is a Zn(2+) binding site. The 'HIGH' region signature appears at 31 to 41 (PTVYDFAHIGN). Zn(2+) contacts are provided by cysteine 224, histidine 249, and glutamate 253. The 'KMSKS' region motif lies at 282-286 (KMSKS). Position 285 (lysine 285) interacts with ATP.

This sequence belongs to the class-I aminoacyl-tRNA synthetase family. As to quaternary structure, monomer. Zn(2+) is required as a cofactor.

Its subcellular location is the cytoplasm. The enzyme catalyses tRNA(Cys) + L-cysteine + ATP = L-cysteinyl-tRNA(Cys) + AMP + diphosphate. This is Cysteine--tRNA ligase from Nitrobacter winogradskyi (strain ATCC 25391 / DSM 10237 / CIP 104748 / NCIMB 11846 / Nb-255).